A 364-amino-acid chain; its full sequence is UDP-N-acetylglucosamine--N-acetylmuramyl-(pentapeptide) pyrophosphoryl-undecaprenol N-acetylglucosamine transferase 1 (364 aa).

UDP-N-acetyl-alpha-D-glucosamine contacts are provided by residues 10–12 (TGG), asparagine 124, serine 195, isoleucine 250, and glutamine 295.

Belongs to the glycosyltransferase 28 family. MurG subfamily.

It localises to the cell membrane. The enzyme catalyses di-trans,octa-cis-undecaprenyl diphospho-N-acetyl-alpha-D-muramoyl-L-alanyl-D-glutamyl-meso-2,6-diaminopimeloyl-D-alanyl-D-alanine + UDP-N-acetyl-alpha-D-glucosamine = di-trans,octa-cis-undecaprenyl diphospho-[N-acetyl-alpha-D-glucosaminyl-(1-&gt;4)]-N-acetyl-alpha-D-muramoyl-L-alanyl-D-glutamyl-meso-2,6-diaminopimeloyl-D-alanyl-D-alanine + UDP + H(+). It functions in the pathway cell wall biogenesis; peptidoglycan biosynthesis. In terms of biological role, cell wall formation. Catalyzes the transfer of a GlcNAc subunit on undecaprenyl-pyrophosphoryl-MurNAc-pentapeptide (lipid intermediate I) to form undecaprenyl-pyrophosphoryl-MurNAc-(pentapeptide)GlcNAc (lipid intermediate II). This chain is UDP-N-acetylglucosamine--N-acetylmuramyl-(pentapeptide) pyrophosphoryl-undecaprenol N-acetylglucosamine transferase 1, found in Bacillus cereus (strain ATCC 14579 / DSM 31 / CCUG 7414 / JCM 2152 / NBRC 15305 / NCIMB 9373 / NCTC 2599 / NRRL B-3711).